We begin with the raw amino-acid sequence, 222 residues long: 2-C-methyl-D-erythritol 2,4-cyclodiphosphate synthase, chloroplastic (222 aa).

A chloroplast-targeting transit peptide spans 1-43 (MATASSLFLASPVATAPTARARSTPSASPARPSLRLRRPSTLA). Residues aspartate 73 and histidine 75 each coordinate a divalent metal cation. Substrate is bound by residues 73–75 (DLH), 99–100 (HS), 103–111 (DVLLHCVVD), 121–123 (DIG), 126–130 (FPDSD), aspartate 130, 165–171 (LQKPKIS), and 196–200 (AKTHE). Histidine 107 contacts a divalent metal cation.

Belongs to the IspF family. As to quaternary structure, homotrimer. A divalent metal cation is required as a cofactor. Expressed in roots, leaves, stems, leaf sheaths and young panicles.

The protein localises to the plastid. It is found in the chloroplast. The catalysed reaction is 4-CDP-2-C-methyl-D-erythritol 2-phosphate = 2-C-methyl-D-erythritol 2,4-cyclic diphosphate + CMP. It participates in isoprenoid biosynthesis; isopentenyl diphosphate biosynthesis via DXP pathway; isopentenyl diphosphate from 1-deoxy-D-xylulose 5-phosphate: step 4/6. Its function is as follows. Enzyme of the plastid non-mevalonate pathway for isoprenoid biosynthesis that converts 4-diphosphocytidyl-2C-methyl-D-erythritol 2-phosphate into 2C-methyl-D-erythritol 2,4-cyclodiphosphate and CMP. Is essential for chloroplast development. The sequence is that of 2-C-methyl-D-erythritol 2,4-cyclodiphosphate synthase, chloroplastic from Oryza sativa subsp. japonica (Rice).